A 63-amino-acid chain; its full sequence is Bowman-birk type proteinase inhibitor (63 aa).

Disulfide bonds link C7–C61, C8–C23, C11–C57, C13–C21, C31–C38, C35–C50, and C40–C48.

Inhibits trypsin, chymotrypsin, plasmin and factor XIIa. Does not inhibit factor Xa, thrombin and plasma kallikrein. The protein is Bowman-birk type proteinase inhibitor of Amburana acreana (Cerejeira).